A 358-amino-acid polypeptide reads, in one-letter code: Peptide chain release factor 1 (358 aa).

Gln234 carries the post-translational modification N5-methylglutamine. The segment at 283–306 (ERLHSERAGQRKSMVGSGDRSERI) is disordered.

It belongs to the prokaryotic/mitochondrial release factor family. Methylated by PrmC. Methylation increases the termination efficiency of RF1.

Its subcellular location is the cytoplasm. In terms of biological role, peptide chain release factor 1 directs the termination of translation in response to the peptide chain termination codons UAG and UAA. In Zymomonas mobilis subsp. mobilis (strain ATCC 31821 / ZM4 / CP4), this protein is Peptide chain release factor 1.